We begin with the raw amino-acid sequence, 51 residues long: MARNKPLGKKLRLAAAFKXNRNPPVWVVVKTKRRVTRSPARRHWRRVKLKA.

The protein belongs to the eukaryotic ribosomal protein eL39 family.

This Pyrobaculum aerophilum (strain ATCC 51768 / DSM 7523 / JCM 9630 / CIP 104966 / NBRC 100827 / IM2) protein is Large ribosomal subunit protein eL39 (rpl39e).